Consider the following 497-residue polypeptide: Nuclear pore complex protein npp-16 (497 aa).

Disordered regions lie at residues 76-95 (VPRRTENSSESSGETVAPRK), 210-308 (TKKS…SAPK), and 359-379 (MENQNQAKPEGSGEDDEGEYV). 2 stretches are compositionally biased toward basic and acidic residues: residues 231 to 240 (KDGDKPKETP) and 250 to 260 (KPAEPSEEPKA). The segment at 390–497 (EPDAVLSSKV…FTDKILEVAV (108 aa)) is ranBD1.

As to quaternary structure, interacts with importin beta imb-1. Interacts with DNA-directed RNA polymerase III subunit rpc-1. Interacts with TATA-box-binding protein tbp-1. Interacts with GTF3C5 homolog tftc-5. Interacts with GTF3C3 homolog tftc-3.

Its subcellular location is the nucleus. It localises to the nuclear pore complex. It is found in the nucleus membrane. Functionally, component of the nuclear pore complex. Plays a direct role in nuclear protein import. Required for anoxia-induced prophase arrest; may function in concert with cdk-1 to arrest prophase blastomeres in response to anoxia. The protein is Nuclear pore complex protein npp-16 of Caenorhabditis elegans.